The chain runs to 122 residues: UPF0482 protein Spro_2288 (122 aa).

The signal sequence occupies residues 1–31; that stretch reads MKTLSTQRLLRGMLPVAMLMLMGAWQAPALA. Residues 46–71 form a disordered region; it reads SNSGAMSTEAARQSKQQFNDTKSLRN.

This sequence belongs to the UPF0482 family.

The sequence is that of UPF0482 protein Spro_2288 from Serratia proteamaculans (strain 568).